Here is a 558-residue protein sequence, read N- to C-terminus: Serine palmitoyltransferase 1 (558 aa).

Residues 1-49 (MAHIPEVLPKSIPIPAFIVTTSSYLWYYFNLVLTQIPGGQFIVSYIKKS) are Lumenal-facing. The helical transmembrane segment at 50–84 (HHDDPYRTTVEIGLILYGIIYYLSKPQQKKSLQAQ) threads the bilayer. The Cytoplasmic portion of the chain corresponds to 85–341 (KPNLSPQEID…GRGLSEHFNM (257 aa)). The residue at position 121 (Thr121) is a Phosphothreonine. A helical membrane pass occupies residues 342 to 371 (DRATAIDITVGSMATALGSTGGFVLGDSVM). Residues 372–424 (CLHQRIGSNAYCFSACLPAYTVTSVSKVLKLMDSNNDAVQTLQKLSKSLHDSF) are Lumenal-facing. A helical membrane pass occupies residues 425–457 (ASDDSLRSYVIVTSSPVSAVLHLQLTPAYRSRK). At 458-558 (FGYTCEQLFE…ILACCQESNK (101 aa)) the chain is on the cytoplasmic side.

The protein belongs to the class-II pyridoxal-phosphate-dependent aminotransferase family. In terms of assembly, LCB1 and LCB2 encode essential subunits of the enzyme and form a heterodimer. Component of the SPOTS complex, at least composed of LCB1/2 (LCB1 and/or LCB2), ORM1/2 (ORM1 and/or ORM2), SAC1 and TSC3. Interacts with LCB2 and TSC3. It depends on pyridoxal 5'-phosphate as a cofactor.

The protein resides in the cytoplasm. Its subcellular location is the endoplasmic reticulum membrane. The catalysed reaction is L-serine + hexadecanoyl-CoA + H(+) = 3-oxosphinganine + CO2 + CoA. Its pathway is lipid metabolism; sphingolipid metabolism. Its function is as follows. Component of serine palmitoyltransferase (SPT), which catalyzes the committed step in the synthesis of sphingolipids, the condensation of serine with palmitoyl CoA to form the long chain base 3-ketosphinganine. The chain is Serine palmitoyltransferase 1 (LCB1) from Saccharomyces cerevisiae (strain ATCC 204508 / S288c) (Baker's yeast).